A 503-amino-acid chain; its full sequence is UDP-N-acetylmuramoylalanine--D-glutamate ligase (503 aa).

An ATP-binding site is contributed by 129–135; the sequence is GTNGKTT.

Belongs to the MurCDEF family.

The protein resides in the cytoplasm. It carries out the reaction UDP-N-acetyl-alpha-D-muramoyl-L-alanine + D-glutamate + ATP = UDP-N-acetyl-alpha-D-muramoyl-L-alanyl-D-glutamate + ADP + phosphate + H(+). The protein operates within cell wall biogenesis; peptidoglycan biosynthesis. Cell wall formation. Catalyzes the addition of glutamate to the nucleotide precursor UDP-N-acetylmuramoyl-L-alanine (UMA). The polypeptide is UDP-N-acetylmuramoylalanine--D-glutamate ligase (Burkholderia cenocepacia (strain HI2424)).